The chain runs to 336 residues: Small ribosomal subunit protein RACK1y (336 aa).

WD repeat units follow at residues 15 to 55 (GHND…TAVA), 74 to 113 (GHSH…TTRR), 116 to 155 (GHTK…KYTI), 164 to 205 (GHTG…LRTK), 208 to 247 (GHNG…MLYK), 249 to 287 (DAGA…VMQD), and 297 to 336 (SQML…GYAI).

It belongs to the WD repeat G protein beta family. Ribosomal protein RACK1 subfamily. As to quaternary structure, homodimer and heterodimer with RACK1A.

In terms of biological role, component of the RACK1 regulatory proteins that play a role in multiple signal transduction pathways. The sequence is that of Small ribosomal subunit protein RACK1y (RACK1B) from Oryza sativa subsp. japonica (Rice).